Here is an 859-residue protein sequence, read N- to C-terminus: Cadherin-related family member 1 (859 aa).

The first 21 residues, 1–21 (MRRGPRVALVLGLLRIYLAQA), serve as a signal peptide directing secretion. At 22–701 (NFAPHFFDNG…LIQTKDNPMK (680 aa)) the chain is on the extracellular side. 6 consecutive Cadherin domains span residues 36 to 135 (NGNM…APRF), 136 to 247 (IQEP…APIF), 248 to 354 (VGTP…PPTF), 360 to 473 (PQNK…VPKF), 474 to 577 (TSHY…YPQF), and 569 to 691 (DVND…MAAF). N-linked (GlcNAc...) asparagine glycans are attached at residues Asn-58 and Asn-89. N-linked (GlcNAc...) asparagine glycosylation occurs at Asn-288. A helical membrane pass occupies residues 702 to 722 (AVGVLAGVMAIVVAITVLIST). Topologically, residues 723-859 (ATFWRNKKSN…KKSLDNKAYI (137 aa)) are cytoplasmic. Positions 793–838 (PALPPPPKMASSMVAQQTVPTVSGSLTPQPSPQLPTPKTLGGPVQS) are disordered. Over residues 805 to 816 (MVAQQTVPTVSG) the composition is skewed to polar residues.

As to quaternary structure, interacts with PROM1. Post-translationally, undergoes proteolytic cleavage; produces a soluble 95 kDa N-terminal fragment and a 25 kDa cell-associated C-terminal fragment. In terms of tissue distribution, expressed in cone and rod photoreceptor cells (at protein level). Expressed in photoreceptor cells of the outer nuclear layer of the retina. Expressed in mitral and tufted cells in the olfactory bulb.

Its subcellular location is the cell membrane. Its function is as follows. Potential calcium-dependent cell-adhesion protein. May be required for the structural integrity of the outer segment (OS) of photoreceptor cells. The protein is Cadherin-related family member 1 (Cdhr1) of Mus musculus (Mouse).